Reading from the N-terminus, the 878-residue chain is Alanine--tRNA ligase (878 aa).

Residues His566, His570, Cys668, and His672 each contribute to the Zn(2+) site. Residues 846 to 866 are disordered; sequence GGGRPDMAQAGGKQPEKLEEA.

The protein belongs to the class-II aminoacyl-tRNA synthetase family. Zn(2+) is required as a cofactor.

The protein localises to the cytoplasm. It carries out the reaction tRNA(Ala) + L-alanine + ATP = L-alanyl-tRNA(Ala) + AMP + diphosphate. Its function is as follows. Catalyzes the attachment of alanine to tRNA(Ala) in a two-step reaction: alanine is first activated by ATP to form Ala-AMP and then transferred to the acceptor end of tRNA(Ala). Also edits incorrectly charged Ser-tRNA(Ala) and Gly-tRNA(Ala) via its editing domain. The polypeptide is Alanine--tRNA ligase (Bacillus pumilus (strain SAFR-032)).